The following is a 257-amino-acid chain: Short chain dehydrogenase ausX (257 aa).

NADP(+)-binding residues include Ile11, Asp57, Arg119, Tyr151, Lys155, and Val184. The Proton acceptor role is filled by Tyr151. Lys155 serves as the catalytic Lowers pKa of active site Tyr.

Belongs to the short-chain dehydrogenases/reductases (SDR) family.

Its pathway is secondary metabolite biosynthesis; terpenoid biosynthesis. Functionally, short chain dehydrogenase; part of the gene cluster that mediates the biosynthesis of calidodehydroaustin, a fungal meroterpenoid. The first step of the pathway is the synthesis of 3,5-dimethylorsellinic acid by the polyketide synthase ausA. 3,5-dimethylorsellinic acid is then prenylated by the polyprenyl transferase ausN. Further epoxidation by the FAD-dependent monooxygenase ausM and cyclization by the probable terpene cyclase ausL lead to the formation of protoaustinoid A. Protoaustinoid A is then oxidized to spiro-lactone preaustinoid A3 by the combined action of the FAD-binding monooxygenases ausB and ausC, and the dioxygenase ausE. Acid-catalyzed keto-rearrangement and ring contraction of the tetraketide portion of preaustinoid A3 by ausJ lead to the formation of preaustinoid A4. The aldo-keto reductase ausK, with the help of ausH, is involved in the next step by transforming preaustinoid A4 into isoaustinone which is in turn hydroxylated by the P450 monooxygenase ausI to form austinolide. The cytochrome P450 monooxygenase ausG modifies austinolide to austinol. Austinol is further acetylated to austin by the O-acetyltransferase ausP, which spontaneously changes to dehydroaustin. The cytochrome P450 monooxygenase ausR then converts dehydroaustin is into 7-dehydrodehydroaustin. The hydroxylation catalyzed by ausR permits the O-acetyltransferase ausQ to add an additional acetyl group to the molecule, leading to the formation of acetoxydehydroaustin. The short chain dehydrogenase ausT catalyzes the reduction of the double bond present between carbon atoms 1 and 2 to convert 7-dehydrodehydroaustin into 1,2-dihydro-7-hydroxydehydroaustin. AusQ catalyzes not only an acetylation reaction but also the addition of the PKS ausV diketide product to 1,2-dihydro-7-hydroxydehydroaustin, forming precalidodehydroaustin. Finally, the iron/alpha-ketoglutarate-dependent dioxygenase converts precalidodehydroaustin into calidodehydroaustin. The sequence is that of Short chain dehydrogenase ausX from Aspergillus calidoustus.